The chain runs to 867 residues: Rifampicin phosphotransferase (867 aa).

The segment at 1 to 314 (MKPYVLKFQE…FYIVQSRPIT (314 aa)) is ATP-binding. Positions 22, 117, 132, 136, 183, 297, 309, and 311 each coordinate ATP. The segment at 327-754 (NRVYISVAHQ…TSDGEMINGE (428 aa)) is rifampicin-binding. Q336 and Y351 together coordinate rifampicin. The interval 767–865 (GLPVSSGTVE…INGTEGYIEI (99 aa)) is swivel phosphohistidine. Residue H825 is the Tele-phosphohistidine intermediate of the active site.

Belongs to the rifampicin phosphotransferase family.

The catalysed reaction is rifampicin + ATP + H2O = 21-phosphorifampicin + AMP + phosphate + 2 H(+). In terms of biological role, catalyzes the phosphorylation of rifampicin, also known as rifampin (RIF), leading to its inactivation. Confers high level resistance to a variety of clinically used rifamycin antibiotics. Does not show phosphoenolpyruvate (PEP) synthase activity. The sequence is that of Rifampicin phosphotransferase from Listeria monocytogenes serotype 4b (strain F2365).